The primary structure comprises 450 residues: Bifunctional protein GlmU (450 aa).

The interval 1–229 is pyrophosphorylase; the sequence is MRRHAIILAA…VEEIMGVNDR (229 aa). UDP-N-acetyl-alpha-D-glucosamine contacts are provided by residues 8–11, Lys22, Gln72, and 77–78; these read LAAG and GT. Mg(2+) is bound at residue Asp102. Gly139, Glu154, and Asn227 together coordinate UDP-N-acetyl-alpha-D-glucosamine. Position 227 (Asn227) interacts with Mg(2+). Residues 230–250 form a linker region; sequence VMLSQAEKAMQRRTNHYHMLN. Residues 251-450 are N-acetyltransferase; sequence GVTIIDPDST…RQTTKEGYRK (200 aa). 2 residues coordinate UDP-N-acetyl-alpha-D-glucosamine: Arg332 and Lys350. The active-site Proton acceptor is His362. Tyr365 and Asn376 together coordinate UDP-N-acetyl-alpha-D-glucosamine. Residues 385–386, Ala422, and Arg439 each bind acetyl-CoA; that span reads NY.

In the N-terminal section; belongs to the N-acetylglucosamine-1-phosphate uridyltransferase family. This sequence in the C-terminal section; belongs to the transferase hexapeptide repeat family. In terms of assembly, homotrimer. Mg(2+) is required as a cofactor.

Its subcellular location is the cytoplasm. The enzyme catalyses alpha-D-glucosamine 1-phosphate + acetyl-CoA = N-acetyl-alpha-D-glucosamine 1-phosphate + CoA + H(+). The catalysed reaction is N-acetyl-alpha-D-glucosamine 1-phosphate + UTP + H(+) = UDP-N-acetyl-alpha-D-glucosamine + diphosphate. It participates in nucleotide-sugar biosynthesis; UDP-N-acetyl-alpha-D-glucosamine biosynthesis; N-acetyl-alpha-D-glucosamine 1-phosphate from alpha-D-glucosamine 6-phosphate (route II): step 2/2. The protein operates within nucleotide-sugar biosynthesis; UDP-N-acetyl-alpha-D-glucosamine biosynthesis; UDP-N-acetyl-alpha-D-glucosamine from N-acetyl-alpha-D-glucosamine 1-phosphate: step 1/1. It functions in the pathway bacterial outer membrane biogenesis; LPS lipid A biosynthesis. Functionally, catalyzes the last two sequential reactions in the de novo biosynthetic pathway for UDP-N-acetylglucosamine (UDP-GlcNAc). The C-terminal domain catalyzes the transfer of acetyl group from acetyl coenzyme A to glucosamine-1-phosphate (GlcN-1-P) to produce N-acetylglucosamine-1-phosphate (GlcNAc-1-P), which is converted into UDP-GlcNAc by the transfer of uridine 5-monophosphate (from uridine 5-triphosphate), a reaction catalyzed by the N-terminal domain. This Staphylococcus aureus (strain NCTC 8325 / PS 47) protein is Bifunctional protein GlmU.